We begin with the raw amino-acid sequence, 593 residues long: High affinity cGMP-specific 3',5'-cyclic phosphodiesterase 9A (593 aa).

The tract at residues serine 87 to glutamate 141 is disordered. The segment covering arginine 104 to alanine 122 has biased composition (basic and acidic residues). Residues proline 236–aspartate 557 form the PDEase domain. Histidine 312 functions as the Proton donor in the catalytic mechanism. Residue histidine 312–histidine 316 participates in 3',5'-cyclic GMP binding. Zn(2+)-binding residues include histidine 316, histidine 352, and aspartate 353. Aspartate 353 lines the 3',5'-cyclic GMP pocket. Position 353 (aspartate 353) interacts with Mg(2+). Serine 379 carries the phosphoserine modification. Residues aspartate 462, tyrosine 484, and alanine 512 to glutamine 513 contribute to the 3',5'-cyclic GMP site. Zn(2+) is bound at residue aspartate 462. The disordered stretch occupies residues glutamine 564–alanine 593. A compositionally biased stretch (basic and acidic residues) spans glutamate 576–alanine 593.

The protein belongs to the cyclic nucleotide phosphodiesterase family. PDE9 subfamily. In terms of assembly, homodimer. The cofactor is Zn(2+). Requires Mg(2+) as cofactor. Expressed in all tissues examined (testis, brain, small intestine, skeletal muscle, heart, lung, thymus, spleen, placenta, kidney, liver, pancreas, ovary and prostate) except blood. Highest levels in brain, heart, kidney, spleen, prostate and colon. Isoform PDE9A12 is found in prostate. In brain, present in the cortex, cerebellum, and subiculum (at protein level). In heart, primarily localizes to myocytes.

Its subcellular location is the cell projection. It is found in the ruffle membrane. The protein resides in the cytoplasm. The protein localises to the perinuclear region. It localises to the golgi apparatus. Its subcellular location is the endoplasmic reticulum. It is found in the cell membrane. The protein resides in the sarcolemma. It catalyses the reaction 3',5'-cyclic GMP + H2O = GMP + H(+). The protein operates within purine metabolism; 3',5'-cyclic GMP degradation; GMP from 3',5'-cyclic GMP: step 1/1. With respect to regulation, inhibited by zaprinast; inhibitor is however not specific to PDE9A. Specifically inhibited by BAY-73-6691 (1-(2-chlorophenyl)-6-((2R)-3,3,3- trifluoro-2-methylpropyl)-1,5-dihydro-4H-pyrazolo(3,4-d)pyrimidine-4-one). BAY-73-9961 has two enantiomers, (R) and (S), due to the presence of a chiral center, and both forms vary in their pattern of interaction. Specifically inhibited by PF-4181366 (4H-Pyrazolo[3,4-d]pyrimidin-4-one, 1- cyclopentyl-1,5-dihydro-6-[(3S,4S)-4-methyl- 1-(6-quinoxalinylmethyl)-3-pyrrolidinyl]-one). Specifically inhibited by PF-4449613 ((R)-6-(1-(3-phenoxyazetidin-1-yl)ethyl)-1-(tetrahydro-2H-pyran-4-yl)-1H-pyrazolo[3,4-d]pyrimidin- 4(5H)-one). Specifically inhibited by inhibitor 28 (2-((1-(2-Chlorophenyl)-4-hydroxy-1Hpyrazolo[ 3,4-d]pyrimidin-6-yl)amino)-N-(4- methoxyphenyl)propanamide): inhibitor forms a hydrogen bond with Tyr-484 and Gln-513. Specifically inhibited by 1-Cyclopentyl-6-[(1r)-1-(3-phenoxyazetidin- 1-Yl)ethyl]-1,5-dihydro-4h-pyrazolo[3,4-D] pyrimidin-4-one: inhibitor forms a hydrogen bond with Tyr-484 and Gln-513. In terms of biological role, specifically hydrolyzes the second messenger cGMP, which is a key regulator of many important physiological processes. Highly specific: compared to other members of the cyclic nucleotide phosphodiesterase family, has the highest affinity and selectivity for cGMP. Specifically regulates natriuretic-peptide-dependent cGMP signaling in heart, acting as a regulator of cardiac hypertrophy in myocytes and muscle. Does not regulate nitric oxide-dependent cGMP in heart. Additional experiments are required to confirm whether its ability to hydrolyze natriuretic-peptide-dependent cGMP is specific to heart or is a general feature of the protein. In brain, involved in cognitive function, such as learning and long-term memory. The chain is High affinity cGMP-specific 3',5'-cyclic phosphodiesterase 9A from Homo sapiens (Human).